We begin with the raw amino-acid sequence, 339 residues long: Dihydroorotate dehydrogenase (quinone) (339 aa).

FMN-binding positions include A64–K68 and T88. A substrate-binding site is contributed by K68. N113 to F117 is a substrate binding site. 2 residues coordinate FMN: N141 and N174. N174 lines the substrate pocket. The active-site Nucleophile is S177. N179 is a substrate binding site. K219 and T247 together coordinate FMN. Residue N248–T249 coordinates substrate. Residues G270, G299, and Y320–S321 each bind FMN.

Belongs to the dihydroorotate dehydrogenase family. Type 2 subfamily. As to quaternary structure, monomer. FMN serves as cofactor.

The protein resides in the cell membrane. The catalysed reaction is (S)-dihydroorotate + a quinone = orotate + a quinol. It functions in the pathway pyrimidine metabolism; UMP biosynthesis via de novo pathway; orotate from (S)-dihydroorotate (quinone route): step 1/1. Catalyzes the conversion of dihydroorotate to orotate with quinone as electron acceptor. This chain is Dihydroorotate dehydrogenase (quinone), found in Haemophilus influenzae (strain PittEE).